The following is a 155-amino-acid chain: Fibroblast growth factor 1 (155 aa).

N-acetylalanine is present on Ala2. Positions 2–15 (AEGEITTFAALTER) are excised as a propeptide. Asn33 lines the heparin pocket. The tract at residues 127–143 (KKNGSCKRGPRTHYGQK) is heparin-binding.

It belongs to the heparin-binding growth factors family. Monomer. Homodimer. Interacts with FGFR1, FGFR2, FGFR3 and FGFR4. Affinity between fibroblast growth factors (FGFs) and their receptors is increased by heparan sulfate glycosaminoglycans that function as coreceptors. Found in a complex with FGFBP1, FGF1 and FGF2. Interacts with FGFBP1. Part of a Cu(2+)-dependent multiprotein aggregate containing FGF1, S100A13 and SYT1. Interacts with SYT1. Interacts with S100A13. Interacts with LRRC59. Interacts with CSNKA, CSNKB and FIBP. While binding with LRRC59, CSNKA and FIBP seem mutually exclusive, CSNKB and FIBP may cooperatively interact with FGF1. Forms a ternary complex with FGFR1 and ITGAV:ITGB3 and induces the recruitment of PTPN11 to the complex. In the nucleus, phosphorylated by PKC/PRKCD.

It is found in the secreted. Its subcellular location is the cytoplasm. The protein localises to the cell cortex. It localises to the cytosol. The protein resides in the nucleus. Its function is as follows. Plays an important role in the regulation of cell survival, cell division, angiogenesis, cell differentiation and cell migration. Functions as a potent mitogen in vitro. Acts as a ligand for FGFR1 and integrins. Binds to FGFR1 in the presence of heparin leading to FGFR1 dimerization and activation via sequential autophosphorylation on tyrosine residues which act as docking sites for interacting proteins, leading to the activation of several signaling cascades. Binds to integrin ITGAV:ITGB3. Its binding to integrin, subsequent ternary complex formation with integrin and FGFR1, and the recruitment of PTPN11 to the complex are essential for FGF1 signaling. Induces the phosphorylation and activation of FGFR1, FRS2, MAPK3/ERK1, MAPK1/ERK2 and AKT1. Can induce angiogenesis. This Mus musculus (Mouse) protein is Fibroblast growth factor 1 (Fgf1).